Reading from the N-terminus, the 388-residue chain is Diacylglycerol O-acyltransferase 2 (388 aa).

Over 1–69 (MKTLIAAYSG…NRSKVEKHLQ (69 aa)) the chain is Cytoplasmic. The chain crosses the membrane as a helical span at residues 70-88 (VISVLQWVLSFLVLGVACS). Topologically, residues 89-92 (VILM) are lumenal. Residues 93–112 (YTFCTDCWLIAALYFTWLAF) traverse the membrane as a helical segment. At 113–388 (DWNTPKKGGR…LPETEVLEVN (276 aa)) the chain is on the cytoplasmic side.

This sequence belongs to the diacylglycerol acyltransferase family. Forms multimeric complexes consisting of several DGAT2 subunits. Interacts with SLC27A1 and this interaction is enhanced in the presence of ZFYVE1.

The protein resides in the endoplasmic reticulum membrane. It is found in the lipid droplet. Its subcellular location is the cytoplasm. It localises to the perinuclear region. It carries out the reaction an acyl-CoA + a 1,2-diacyl-sn-glycerol = a triacyl-sn-glycerol + CoA. The catalysed reaction is all-trans-retinol + an acyl-CoA = an all-trans-retinyl ester + CoA. The enzyme catalyses 2-(9Z-octadecenoyl)-glycerol + (9Z)-octadecenoyl-CoA = 1,2-di-(9Z-octadecenoyl)-sn-glycerol + CoA. It catalyses the reaction 1,2-di-(9Z-octadecenoyl)-sn-glycerol + (9Z)-octadecenoyl-CoA = 1,2,3-tri-(9Z-octadecenoyl)-glycerol + CoA. It carries out the reaction all-trans-retinol + hexadecanoyl-CoA = all-trans-retinyl hexadecanoate + CoA. The catalysed reaction is 1-O-(9Z-octadecenyl)-glycerol + (9Z)-octadecenoyl-CoA = 1-O-(9Z-octadecyl)-3-(9Z-octadecenoyl)-glycerol + CoA. The enzyme catalyses 1-(9Z-octadecenoyl)-glycerol + (9Z)-octadecenoyl-CoA = 1,2-di-(9Z-octadecenoyl)-glycerol + CoA. It catalyses the reaction 1,2-di-(9Z-octadecenoyl)-sn-glycerol + hexadecanoyl-CoA = 1,2-di-(9Z)-octadecenoyl-3-hexadecanoyl-sn-glycerol + CoA. It carries out the reaction 1,3-di-(9Z-octadecenoyl)-glycerol + (9Z)-octadecenoyl-CoA = 1,2,3-tri-(9Z-octadecenoyl)-glycerol + CoA. The catalysed reaction is 2,3-di-(9Z)-octadecenoyl-sn-glycerol + (9Z)-octadecenoyl-CoA = 1,2,3-tri-(9Z-octadecenoyl)-glycerol + CoA. The enzyme catalyses 2-(9Z-octadecenoyl)-glycerol + hexadecanoyl-CoA = 1-hexadecanoyl-2-(9Z-octadecenoyl)-sn-glycerol + CoA. The protein operates within glycerolipid metabolism; triacylglycerol biosynthesis. With respect to regulation, inhibited by niacin. Essential acyltransferase that catalyzes the terminal and only committed step in triacylglycerol synthesis by using diacylglycerol and fatty acyl CoA as substrates. Required for synthesis and storage of intracellular triglycerides. Probably plays a central role in cytosolic lipid accumulation. In liver, is primarily responsible for incorporating endogenously synthesized fatty acids into triglycerides. Also functions as an acyl-CoA retinol acyltransferase (ARAT). Also able to use 1-monoalkylglycerol (1-MAkG) as an acyl acceptor for the synthesis of monoalkyl-monoacylglycerol (MAMAG). This Rattus norvegicus (Rat) protein is Diacylglycerol O-acyltransferase 2.